The sequence spans 855 residues: DNA mismatch repair protein MutS (855 aa).

Residue 613–620 (GPNMGGKS) coordinates ATP.

It belongs to the DNA mismatch repair MutS family.

This protein is involved in the repair of mismatches in DNA. It is possible that it carries out the mismatch recognition step. This protein has a weak ATPase activity. This chain is DNA mismatch repair protein MutS, found in Azotobacter vinelandii (strain DJ / ATCC BAA-1303).